The primary structure comprises 156 residues: ATP synthase subunit b (156 aa).

The helical transmembrane segment at 11 to 31 threads the bilayer; that stretch reads AIAFVLFVIFCMKYVWPPIMA.

Belongs to the ATPase B chain family. In terms of assembly, F-type ATPases have 2 components, F(1) - the catalytic core - and F(0) - the membrane proton channel. F(1) has five subunits: alpha(3), beta(3), gamma(1), delta(1), epsilon(1). F(0) has three main subunits: a(1), b(2) and c(10-14). The alpha and beta chains form an alternating ring which encloses part of the gamma chain. F(1) is attached to F(0) by a central stalk formed by the gamma and epsilon chains, while a peripheral stalk is formed by the delta and b chains.

It is found in the cell inner membrane. Its function is as follows. F(1)F(0) ATP synthase produces ATP from ADP in the presence of a proton or sodium gradient. F-type ATPases consist of two structural domains, F(1) containing the extramembraneous catalytic core and F(0) containing the membrane proton channel, linked together by a central stalk and a peripheral stalk. During catalysis, ATP synthesis in the catalytic domain of F(1) is coupled via a rotary mechanism of the central stalk subunits to proton translocation. In terms of biological role, component of the F(0) channel, it forms part of the peripheral stalk, linking F(1) to F(0). The protein is ATP synthase subunit b of Yersinia pseudotuberculosis serotype O:1b (strain IP 31758).